The sequence spans 284 residues: F-box protein PP2-B13 (284 aa).

An F-box domain is found at 1 to 44 (MMMLPEACVANILAFTSPADAFSSSEVSSVFRLAGDSDFVWEKF).

The sequence is that of F-box protein PP2-B13 (PP2B13) from Arabidopsis thaliana (Mouse-ear cress).